We begin with the raw amino-acid sequence, 293 residues long: tRNA pseudouridine synthase B (293 aa).

The Nucleophile role is filled by Asp40.

Belongs to the pseudouridine synthase TruB family. Type 1 subfamily.

It carries out the reaction uridine(55) in tRNA = pseudouridine(55) in tRNA. Responsible for synthesis of pseudouridine from uracil-55 in the psi GC loop of transfer RNAs. The sequence is that of tRNA pseudouridine synthase B from Rickettsia akari (strain Hartford).